The chain runs to 97 residues: Large ribosomal subunit protein bL28 (97 aa).

The protein belongs to the bacterial ribosomal protein bL28 family.

The polypeptide is Large ribosomal subunit protein bL28 (Rickettsia felis (strain ATCC VR-1525 / URRWXCal2) (Rickettsia azadi)).